The following is a 103-amino-acid chain: ATP-dependent Clp protease adapter protein ClpS 2 (103 aa).

The protein belongs to the ClpS family. As to quaternary structure, binds to the N-terminal domain of the chaperone ClpA.

In terms of biological role, involved in the modulation of the specificity of the ClpAP-mediated ATP-dependent protein degradation. This chain is ATP-dependent Clp protease adapter protein ClpS 2, found in Agrobacterium fabrum (strain C58 / ATCC 33970) (Agrobacterium tumefaciens (strain C58)).